A 503-amino-acid polypeptide reads, in one-letter code: Variant surface glycoprotein ILTAT 1.3 (503 aa).

Residues 1-29 (MTKAYENRMLLQALVLAAVLCTTHAEGTA) form the signal peptide. 2 disulfide bridges follow: Cys42-Cys168 and Cys150-Cys206. 2 N-linked (GlcNAc...) asparagine glycosylation sites follow: Asn419 and Asn432. Residue Asp480 is the site of GPI-anchor amidated aspartate attachment. A propeptide spans 481 to 503 (SSFILNKQFALSVVSAAFAALLF) (removed in mature form).

The protein resides in the cell membrane. In terms of biological role, VSG forms a coat on the surface of the parasite. The trypanosome evades the immune response of the host by expressing a series of antigenically distinct VSGs from an estimated 1000 VSG genes. The polypeptide is Variant surface glycoprotein ILTAT 1.3 (Trypanosoma brucei brucei).